The primary structure comprises 440 residues: Actin-like protein 7A (440 aa).

Residues 1–27 form a disordered region; sequence MSLDAVWAPQTANIGDGPAKKASDQTS. Residues 36-56 are required for interaction with TES; it reads ASLRDGPAKRAVWVRRDNAEK.

Belongs to the actin family. Interacts (via N-terminus) with TES (via LIM domain 2). Heterodimer with TES; the heterodimer interacts with ENAH to form a heterotrimer. Interacts with ACTL9. Interacts with CYLC1; the interaction may be relevant for proper acrosome attachment to the nuclear envelope. As to expression, detected in testis. Detected at the acrosome of round spermatids (at protein level).

It localises to the cytoplasm. The protein localises to the cytoskeleton. Its subcellular location is the golgi apparatus. It is found in the nucleus. In terms of biological role, essential for normal spermatogenesis and male fertility. Required for normal sperm head morphology, acroplaxome formation, acrosome attachment, and acrosome granule stability. May anchor and stabilize acrosomal adherence to the acroplaxome at least in part by facilitating the presence of F-actin in the subacrosomal space. May play an important role in formation and fusion of Golgi-derived vesicles during acrosome biogenesis. The polypeptide is Actin-like protein 7A (Actl7a) (Rattus norvegicus (Rat)).